The sequence spans 350 residues: Phenylalanine--tRNA ligase alpha subunit (350 aa).

Glu-260 serves as a coordination point for Mg(2+).

It belongs to the class-II aminoacyl-tRNA synthetase family. Phe-tRNA synthetase alpha subunit type 1 subfamily. In terms of assembly, tetramer of two alpha and two beta subunits. Requires Mg(2+) as cofactor.

It localises to the cytoplasm. It catalyses the reaction tRNA(Phe) + L-phenylalanine + ATP = L-phenylalanyl-tRNA(Phe) + AMP + diphosphate + H(+). The polypeptide is Phenylalanine--tRNA ligase alpha subunit (Mycoplasma capricolum subsp. capricolum (strain California kid / ATCC 27343 / NCTC 10154)).